A 1060-amino-acid polypeptide reads, in one-letter code: Protocadherin-1 (1060 aa).

Residues 1–57 (MDSGAGGRRCPEAALLILGPPRMEHLRHSPGPGGQRLLLPSMLLALLLLLAPSPGHA) form the signal peptide. Cadherin domains follow at residues 58 to 168 (TRVV…TPNF), 169 to 280 (ASPV…APKF), 281 to 387 (ERPS…APTI), 396 to 506 (THQD…APVF), 507 to 612 (TQSV…DPKF), 613 to 715 (MLSG…APYI), and 718 to 844 (PSNT…DPEY). Residues 58–852 (TRVVYKVPEE…EYERSKQRGN (795 aa)) are Extracellular-facing. 2 N-linked (GlcNAc...) asparagine glycosylation sites follow: asparagine 305 and asparagine 403. 4 N-linked (GlcNAc...) asparagine glycosylation sites follow: asparagine 618, asparagine 662, asparagine 813, and asparagine 818. Residues 853 to 873 (ILFGVVAGVVAVALLIALAVL) form a helical membrane-spanning segment. The Cytoplasmic portion of the chain corresponds to 874–1060 (VRYCRQREAK…HGAIWTEVWE (187 aa)). Residues 884-897 (SGYQAGKKETKDLY) are compositionally biased toward basic and acidic residues. Residues 884–1045 (SGYQAGKKET…QPFQLSTPQP (162 aa)) form a disordered region. Residues 907–920 (KGNKSKGKKSKSPK) show a composition bias toward basic residues. Phosphoserine occurs at positions 918, 949, 962, and 984. Positions 973–986 (SPLPSIQLQPQSPS) are enriched in low complexity. Polar residues-rich tracts occupy residues 1003–1024 (FVGT…SYRT) and 1033–1043 (QVGQPFQLSTP).

In terms of tissue distribution, highly expressed in the brain and neuro-glial cells.

It localises to the cell junction. It is found in the cell membrane. Its function is as follows. May be involved in cell-cell interaction processes and in cell adhesion. This Homo sapiens (Human) protein is Protocadherin-1 (PCDH1).